Consider the following 187-residue polypeptide: Elongation factor P (187 aa).

It belongs to the elongation factor P family.

It is found in the cytoplasm. It functions in the pathway protein biosynthesis; polypeptide chain elongation. Involved in peptide bond synthesis. Stimulates efficient translation and peptide-bond synthesis on native or reconstituted 70S ribosomes in vitro. Probably functions indirectly by altering the affinity of the ribosome for aminoacyl-tRNA, thus increasing their reactivity as acceptors for peptidyl transferase. This Erythrobacter litoralis (strain HTCC2594) protein is Elongation factor P.